A 275-amino-acid polypeptide reads, in one-letter code: 2,3,4,5-tetrahydropyridine-2,6-dicarboxylate N-succinyltransferase (275 aa).

R106 and D143 together coordinate substrate.

It belongs to the transferase hexapeptide repeat family. Homotrimer.

The protein resides in the cytoplasm. It carries out the reaction (S)-2,3,4,5-tetrahydrodipicolinate + succinyl-CoA + H2O = (S)-2-succinylamino-6-oxoheptanedioate + CoA. It participates in amino-acid biosynthesis; L-lysine biosynthesis via DAP pathway; LL-2,6-diaminopimelate from (S)-tetrahydrodipicolinate (succinylase route): step 1/3. The sequence is that of 2,3,4,5-tetrahydropyridine-2,6-dicarboxylate N-succinyltransferase from Burkholderia ambifaria (strain ATCC BAA-244 / DSM 16087 / CCUG 44356 / LMG 19182 / AMMD) (Burkholderia cepacia (strain AMMD)).